A 413-amino-acid polypeptide reads, in one-letter code: Serine/threonine-protein kinase SSN3 (413 aa).

Residues 26-355 (YHIVGFISSG…AQEALEHPYF (330 aa)) form the Protein kinase domain. Residues 32–40 (ISSGTYGRV) and Lys56 each bind ATP. Asp158 acts as the Proton acceptor in catalysis. The span at 376–385 (RRVTQDDNDI) shows a compositional bias: basic and acidic residues. The segment at 376 to 413 (RRVTQDDNDIRSGSLPGTKRSGLPDDSLMGRASKRLKE) is disordered.

Belongs to the protein kinase superfamily. CMGC Ser/Thr protein kinase family. CDC2/CDKX subfamily. As to quaternary structure, component of the srb8-11 complex, a regulatory module of the Mediator complex. Mg(2+) serves as cofactor.

It is found in the nucleus. The enzyme catalyses L-seryl-[protein] + ATP = O-phospho-L-seryl-[protein] + ADP + H(+). The catalysed reaction is L-threonyl-[protein] + ATP = O-phospho-L-threonyl-[protein] + ADP + H(+). It carries out the reaction [DNA-directed RNA polymerase] + ATP = phospho-[DNA-directed RNA polymerase] + ADP + H(+). In terms of biological role, component of the srb8-11 complex. The srb8-11 complex is a regulatory module of the Mediator complex which is itself involved in regulation of basal and activated RNA polymerase II-dependent transcription. The srb8-11 complex may be involved in the transcriptional repression of a subset of genes regulated by Mediator. It may inhibit the association of the Mediator complex with RNA polymerase II to form the holoenzyme complex. The srb8-11 complex phosphorylates the C-terminal domain (CTD) of the largest subunit of RNA polymerase II. This Aspergillus oryzae (strain ATCC 42149 / RIB 40) (Yellow koji mold) protein is Serine/threonine-protein kinase SSN3 (ssn3).